We begin with the raw amino-acid sequence, 288 residues long: ATP phosphoribosyltransferase (288 aa).

The protein belongs to the ATP phosphoribosyltransferase family. Long subfamily. Mg(2+) is required as a cofactor.

The protein resides in the cytoplasm. The catalysed reaction is 1-(5-phospho-beta-D-ribosyl)-ATP + diphosphate = 5-phospho-alpha-D-ribose 1-diphosphate + ATP. The protein operates within amino-acid biosynthesis; L-histidine biosynthesis; L-histidine from 5-phospho-alpha-D-ribose 1-diphosphate: step 1/9. Its activity is regulated as follows. Feedback inhibited by histidine. Catalyzes the condensation of ATP and 5-phosphoribose 1-diphosphate to form N'-(5'-phosphoribosyl)-ATP (PR-ATP). Has a crucial role in the pathway because the rate of histidine biosynthesis seems to be controlled primarily by regulation of HisG enzymatic activity. The polypeptide is ATP phosphoribosyltransferase (Methanococcus maripaludis (strain C5 / ATCC BAA-1333)).